The following is a 331-amino-acid chain: Olfactory receptor 6K3 (331 aa).

Residues 1–41 (MCWTMPSPFTGSSTRNMESGNQSTVTEFIFTGFPQLQDGSL) lie on the Extracellular side of the membrane. N-linked (GlcNAc...) asparagine glycosylation occurs at Asn21. Residues 42–62 (LYFFPLLFIYTFIIIDNLLIF) form a helical membrane-spanning segment. Topologically, residues 63-70 (SAVRLDTH) are cytoplasmic. The helical transmembrane segment at 71–91 (LHNPMYNFISIFSFLEIWYTT) threads the bilayer. Over 92 to 115 (ATIPKMLSNLISEKKAISMTGCIL) the chain is Extracellular. Cys113 and Cys205 are oxidised to a cystine. The helical transmembrane segment at 116 to 136 (QMYFFHSLENSEGILLTTMAI) threads the bilayer. Over 137–155 (DRYVAICNPLRYQMIMTPR) the chain is Cytoplasmic. Residues 156 to 176 (LCAQLSAGSCLFGFLILLPEI) form a helical membrane-spanning segment. Residues 177–212 (VMISTLPFCGPNQIHQIFCDLVPVLSLACTDTSMIL) lie on the Extracellular side of the membrane. The chain crosses the membrane as a helical span at residues 213–232 (IEDVIHAVTIIITFLIIALS). Residues 233–252 (YVRIVTVILRIPSSEGRQKA) are Cytoplasmic-facing. Residues 253-273 (FSTCAGHLMVFPIFFGSVSLM) form a helical membrane-spanning segment. At 274–286 (YLRFSDTYPPVLD) the chain is on the extracellular side. Residues 287–307 (TAIALMFTVLAPFFNPIIYSL) form a helical membrane-spanning segment. Residues 308-331 (RNKDMNNAIKKLFCLQKVLNKPGG) are Cytoplasmic-facing.

This sequence belongs to the G-protein coupled receptor 1 family.

The protein localises to the cell membrane. Odorant receptor. The chain is Olfactory receptor 6K3 (OR6K3) from Homo sapiens (Human).